A 94-amino-acid polypeptide reads, in one-letter code: Large ribosomal subunit protein eL42 (94 aa).

Zn(2+) is bound by residues C11, C14, C71, and C74. The C4-type zinc finger occupies 11–74; sequence CPFCKRHTIH…LDLRFRCTVC (64 aa).

It belongs to the eukaryotic ribosomal protein eL42 family. Part of the 50S ribosomal subunit. Requires Zn(2+) as cofactor.

Functionally, binds to the 23S rRNA. This chain is Large ribosomal subunit protein eL42, found in Thermococcus kodakarensis (strain ATCC BAA-918 / JCM 12380 / KOD1) (Pyrococcus kodakaraensis (strain KOD1)).